The sequence spans 405 residues: Elongation factor Tu (405 aa).

The tr-type G domain maps to 10-213 (KEHVNVGTIG…AMDEYIPTPQ (204 aa)). Residues 19-26 (GHVDHGKS) form a G1 region. 19–26 (GHVDHGKS) serves as a coordination point for GTP. Mg(2+) is bound at residue serine 26. The G2 stretch occupies residues 64 to 68 (GITIN). Positions 85 to 88 (DCPG) are G3. Residues 85–89 (DCPGH) and 140–143 (NKCD) contribute to the GTP site. Positions 140–143 (NKCD) are G4. Positions 178–180 (SAL) are G5.

It belongs to the TRAFAC class translation factor GTPase superfamily. Classic translation factor GTPase family. EF-Tu/EF-1A subfamily. Monomer.

It is found in the cytoplasm. The catalysed reaction is GTP + H2O = GDP + phosphate + H(+). In terms of biological role, GTP hydrolase that promotes the GTP-dependent binding of aminoacyl-tRNA to the A-site of ribosomes during protein biosynthesis. The protein is Elongation factor Tu of Aquifex aeolicus (strain VF5).